Here is a 146-residue protein sequence, read N- to C-terminus: Hemoglobin subunit beta (146 aa).

The region spanning 2–146 is the Globin domain; that stretch reads HWSAEEKQLI…VAHALARKYH (145 aa). Residues histidine 63 and histidine 92 each coordinate heme b.

It belongs to the globin family. In terms of assembly, heterotetramer of two alpha chains and two beta chains. As to expression, red blood cells.

Involved in oxygen transport from the lung to the various peripheral tissues. In Stercorarius maccormicki (South polar skua), this protein is Hemoglobin subunit beta (HBB).